The following is a 739-amino-acid chain: DNA ligase (739 aa).

34–38 (DADYD) serves as a coordination point for NAD(+). Positions 49–59 (ARFPHLKRPDS) are enriched in basic and acidic residues. Positions 49–70 (ARFPHLKRPDSPSEQVGARPGE) are disordered. NAD(+) is bound by residues 83–84 (SL) and glutamate 117. Catalysis depends on lysine 119, which acts as the N6-AMP-lysine intermediate. NAD(+) contacts are provided by arginine 140, glutamate 175, lysine 291, and lysine 315. Zn(2+) is bound by residues cysteine 420, cysteine 423, cysteine 438, and cysteine 444. Positions 660-739 (ARDSPVAGKT…DGWLKLIEGL (80 aa)) constitute a BRCT domain.

This sequence belongs to the NAD-dependent DNA ligase family. LigA subfamily. It depends on Mg(2+) as a cofactor. Requires Mn(2+) as cofactor.

The enzyme catalyses NAD(+) + (deoxyribonucleotide)n-3'-hydroxyl + 5'-phospho-(deoxyribonucleotide)m = (deoxyribonucleotide)n+m + AMP + beta-nicotinamide D-nucleotide.. In terms of biological role, DNA ligase that catalyzes the formation of phosphodiester linkages between 5'-phosphoryl and 3'-hydroxyl groups in double-stranded DNA using NAD as a coenzyme and as the energy source for the reaction. It is essential for DNA replication and repair of damaged DNA. The sequence is that of DNA ligase from Ruegeria pomeroyi (strain ATCC 700808 / DSM 15171 / DSS-3) (Silicibacter pomeroyi).